A 471-amino-acid chain; its full sequence is GTPase Der (471 aa).

2 EngA-type G domains span residues 3–168 and 178–353; these read PIVA…PDLS and VRVA…ANHA. GTP contacts are provided by residues 9 to 16, 56 to 60, 120 to 123, 184 to 191, 231 to 235, and 296 to 299; these read GRPNVGKS, DTGGI, NKVE, DTAGM, and NKWD. The KH-like domain occupies 354–438; sequence RRISTRELND…PINLYFRTRE (85 aa).

This sequence belongs to the TRAFAC class TrmE-Era-EngA-EngB-Septin-like GTPase superfamily. EngA (Der) GTPase family. As to quaternary structure, associates with the 50S ribosomal subunit.

Functionally, GTPase that plays an essential role in the late steps of ribosome biogenesis. This is GTPase Der from Symbiobacterium thermophilum (strain DSM 24528 / JCM 14929 / IAM 14863 / T).